Consider the following 61-residue polypeptide: Large ribosomal subunit protein uL30 (61 aa).

Belongs to the universal ribosomal protein uL30 family. Part of the 50S ribosomal subunit.

This is Large ribosomal subunit protein uL30 from Saccharophagus degradans (strain 2-40 / ATCC 43961 / DSM 17024).